The primary structure comprises 227 residues: Small heat shock protein hspG3 (227 aa).

Residues 31-227 (NKRVDIIPSM…SSNTIKININ (197 aa)) form the sHSP domain. The tract at residues 119 to 164 (QQQQLENSNKENDEPSIEEFEEDVKSKSELNKTTLNTTENKDEDKT) is disordered.

The protein belongs to the small heat shock protein (HSP20) family.

The sequence is that of Small heat shock protein hspG3 (hspG3) from Dictyostelium discoideum (Social amoeba).